The primary structure comprises 410 residues: Histidine--tRNA ligase (410 aa).

This sequence belongs to the class-II aminoacyl-tRNA synthetase family.

It localises to the cytoplasm. It carries out the reaction tRNA(His) + L-histidine + ATP = L-histidyl-tRNA(His) + AMP + diphosphate + H(+). The sequence is that of Histidine--tRNA ligase from Methanoculleus marisnigri (strain ATCC 35101 / DSM 1498 / JR1).